The following is a 592-amino-acid chain: Inactive metallocarboxypeptidase ecm14 (592 aa).

The N-terminal stretch at 1–22 (MYRQDHVFVVLCAVLLAGQVTA) is a signal peptide. Positions 23–175 (VPAGTGINPH…AIYESRYPTR (153 aa)) are excised as a propeptide. The Peptidase M14 domain occupies 203 to 524 (HYQPFNVILQ…NSVLVLGHFL (322 aa)). Residues H267 and E270 each contribute to the Zn(2+) site. Substrate contacts are provided by residues 267-270 (HARE), R325, and 342-343 (DR). A disulfide bond links C336 and C359. N-linked (GlcNAc...) asparagine glycosylation occurs at N383. Zn(2+) is bound at residue H399. 400–401 (SY) contributes to the substrate binding site. An N-linked (GlcNAc...) asparagine glycan is attached at N548.

Belongs to the peptidase M14 family. Zn(2+) serves as cofactor.

The protein resides in the vacuole. Its subcellular location is the secreted. Inactive carboxypeptidase that may play a role in cell wall organization and biogenesis. The sequence is that of Inactive metallocarboxypeptidase ecm14 (ecm14) from Talaromyces stipitatus (strain ATCC 10500 / CBS 375.48 / QM 6759 / NRRL 1006) (Penicillium stipitatum).